A 318-amino-acid polypeptide reads, in one-letter code: Na(+)-translocating NADH-quinone reductase subunit C (318 aa).

Residues 13-33 form a helical membrane-spanning segment; the sequence is WYIILFIFVLSLVAGTLLSSV. Threonine 281 is subject to FMN phosphoryl threonine.

It belongs to the NqrC family. In terms of assembly, composed of six subunits; NqrA, NqrB, NqrC, NqrD, NqrE and NqrF. The cofactor is FMN.

The protein resides in the cell inner membrane. The enzyme catalyses a ubiquinone + n Na(+)(in) + NADH + H(+) = a ubiquinol + n Na(+)(out) + NAD(+). Functionally, NQR complex catalyzes the reduction of ubiquinone-1 to ubiquinol by two successive reactions, coupled with the transport of Na(+) ions from the cytoplasm to the periplasm. NqrA to NqrE are probably involved in the second step, the conversion of ubisemiquinone to ubiquinol. In Chlamydia muridarum (strain MoPn / Nigg), this protein is Na(+)-translocating NADH-quinone reductase subunit C.